The primary structure comprises 450 residues: Ribosomal protein uS12 methylthiotransferase RimO (450 aa).

The MTTase N-terminal domain occupies 10-125; it reads SRIALVSLGC…VVDIVRRAAT (116 aa). 6 residues coordinate [4Fe-4S] cluster: Cys19, Cys54, Cys88, Cys162, Cys166, and Cys169. The Radical SAM core domain occupies 148–378; that stretch reads SGSPFTAYLK…AAVQREVSRA (231 aa). Residues 381-447 form the TRAM domain; the sequence is RARVGSEVTV…PYDLRARVLS (67 aa).

This sequence belongs to the methylthiotransferase family. RimO subfamily. The cofactor is [4Fe-4S] cluster.

It localises to the cytoplasm. It carries out the reaction L-aspartate(89)-[ribosomal protein uS12]-hydrogen + (sulfur carrier)-SH + AH2 + 2 S-adenosyl-L-methionine = 3-methylsulfanyl-L-aspartate(89)-[ribosomal protein uS12]-hydrogen + (sulfur carrier)-H + 5'-deoxyadenosine + L-methionine + A + S-adenosyl-L-homocysteine + 2 H(+). Functionally, catalyzes the methylthiolation of an aspartic acid residue of ribosomal protein uS12. The protein is Ribosomal protein uS12 methylthiotransferase RimO of Desulforudis audaxviator (strain MP104C).